Reading from the N-terminus, the 230-residue chain is Cytidylate kinase (230 aa).

12–20 (GPSGTGKST) contacts ATP.

The protein belongs to the cytidylate kinase family. Type 1 subfamily.

The protein resides in the cytoplasm. The enzyme catalyses CMP + ATP = CDP + ADP. The catalysed reaction is dCMP + ATP = dCDP + ADP. This is Cytidylate kinase from Corynebacterium efficiens (strain DSM 44549 / YS-314 / AJ 12310 / JCM 11189 / NBRC 100395).